The chain runs to 737 residues: Ribosome-releasing factor 2, mitochondrial (737 aa).

The N-terminal 36 residues, 1–36 (MLCNRLHKAAFAARLRPRLPATVASCRQVHNSDGTI), are a transit peptide targeting the mitochondrion. A tr-type G domain is found at 39–318 (KRIRNIGILA…SVLNFLPAPS (280 aa)). GTP-binding positions include 48–55 (AHIDAGKT), 112–116 (DTPGH), and 166–169 (NKMD).

This sequence belongs to the TRAFAC class translation factor GTPase superfamily. Classic translation factor GTPase family. EF-G/EF-2 subfamily.

The protein localises to the mitochondrion. Mitochondrial GTPase that mediates the disassembly of ribosomes from messenger RNA at the termination of mitochondrial protein biosynthesis. Not involved in the GTP-dependent ribosomal translocation step during translation elongation. The chain is Ribosome-releasing factor 2, mitochondrial from Anopheles gambiae (African malaria mosquito).